Consider the following 197-residue polypeptide: Imidazoleglycerol-phosphate dehydratase (197 aa).

Belongs to the imidazoleglycerol-phosphate dehydratase family.

It is found in the cytoplasm. It catalyses the reaction D-erythro-1-(imidazol-4-yl)glycerol 3-phosphate = 3-(imidazol-4-yl)-2-oxopropyl phosphate + H2O. It functions in the pathway amino-acid biosynthesis; L-histidine biosynthesis; L-histidine from 5-phospho-alpha-D-ribose 1-diphosphate: step 6/9. This chain is Imidazoleglycerol-phosphate dehydratase, found in Pseudomonas fluorescens (strain Pf0-1).